We begin with the raw amino-acid sequence, 473 residues long: GTPase Der (473 aa).

2 consecutive EngA-type G domains span residues 3-167 and 203-378; these read FTVA…GEDR and LRVA…KVWN. GTP is bound by residues 9-16, 56-60, 119-122, 209-216, 256-260, and 321-324; these read GRPNVGKS, DTAGL, NKSE, GRPNAGKS, DTAGM, and NKWD. Residues 379-463 enclose the KH-like domain; it reads KRISTARLNR…PIRIHFRSPD (85 aa).

It belongs to the TRAFAC class TrmE-Era-EngA-EngB-Septin-like GTPase superfamily. EngA (Der) GTPase family. As to quaternary structure, associates with the 50S ribosomal subunit.

Its function is as follows. GTPase that plays an essential role in the late steps of ribosome biogenesis. In Rhizobium johnstonii (strain DSM 114642 / LMG 32736 / 3841) (Rhizobium leguminosarum bv. viciae), this protein is GTPase Der.